The following is a 406-amino-acid chain: MKLSTLFTLATTISTLTTFTIASPVVVVEKRAINETALAEDIPTTKNNHAQASYGKPFAIYQPKAFIISMFSLERDPWLKAMDFVHNITIPGLSPVYPDIHCTTNYTICQITTGEGEINAASSISALTLNPLFDLTKTYFLVGGIAGGEPNYTTIGGVTFAKYAVQVGLEYQLAYEDYHKTNPDWISGYIPYGTDDQNTYPGNVYGTEVFEVNEKLRDRAVELASKVHLNNGTEGNAKFRKLYNETAAQGLPKVVKCDSLTSDNYFTGNVLNDYFANFTLLMTNGSATYCSTAQEDNATLEVMTRLAKHGLVDYDRIMIMRTISDFSRPPPSMSAYEYFFNRSDGGISASLENLVIAGTPIIHDIVQNWDKIYKSGEKYSSKNYVGDIFATLGGKPDFGKESFDTA.

Positions 1–22 are cleaved as a signal peptide; the sequence is MKLSTLFTLATTISTLTTFTIA.

This sequence belongs to the NUP family.

With respect to regulation, mammalian nucleoside transport inhibitors dipyridamole and NBMPR inhibit adenosine transport by NUP. In terms of biological role, nucleoside permease that transports adenosine and guanosine. Does not show any transport activities towards cytidine, adenine, guanine, uridine, and uracil. This chain is Purine nucleoside permease, found in Candida albicans (Yeast).